The following is a 216-amino-acid chain: Cytochrome c oxidase subunit 2 (216 aa).

Residues 1 to 8 are Mitochondrial intermembrane-facing; sequence LGLQNATS. The helical transmembrane segment at 9–39 threads the bilayer; it reads PIMEELIAFHDHALMIIFLISSLVLYIISLM. Topologically, residues 40–53 are mitochondrial matrix; that stretch reads LTTKLTHTSTMNAQ. Residues 54-81 traverse the membrane as a helical segment; it reads EIEMIWTILPAVILIMIALPSLRILYMT. Residues 82–216 are Mitochondrial intermembrane-facing; that stretch reads DEFNKPYLTL…FIYFQDFEVW (135 aa). The Cu cation site is built by histidine 155, cysteine 190, glutamate 192, cysteine 194, histidine 198, and methionine 201. Glutamate 192 serves as a coordination point for Mg(2+).

This sequence belongs to the cytochrome c oxidase subunit 2 family. As to quaternary structure, component of the cytochrome c oxidase (complex IV, CIV), a multisubunit enzyme composed of 14 subunits. The complex is composed of a catalytic core of 3 subunits MT-CO1, MT-CO2 and MT-CO3, encoded in the mitochondrial DNA, and 11 supernumerary subunits COX4I, COX5A, COX5B, COX6A, COX6B, COX6C, COX7A, COX7B, COX7C, COX8 and NDUFA4, which are encoded in the nuclear genome. The complex exists as a monomer or a dimer and forms supercomplexes (SCs) in the inner mitochondrial membrane with NADH-ubiquinone oxidoreductase (complex I, CI) and ubiquinol-cytochrome c oxidoreductase (cytochrome b-c1 complex, complex III, CIII), resulting in different assemblies (supercomplex SCI(1)III(2)IV(1) and megacomplex MCI(2)III(2)IV(2)). Found in a complex with TMEM177, COA6, COX18, COX20, SCO1 and SCO2. Interacts with TMEM177 in a COX20-dependent manner. Interacts with COX20. Interacts with COX16. It depends on Cu cation as a cofactor.

The protein resides in the mitochondrion inner membrane. It catalyses the reaction 4 Fe(II)-[cytochrome c] + O2 + 8 H(+)(in) = 4 Fe(III)-[cytochrome c] + 2 H2O + 4 H(+)(out). Component of the cytochrome c oxidase, the last enzyme in the mitochondrial electron transport chain which drives oxidative phosphorylation. The respiratory chain contains 3 multisubunit complexes succinate dehydrogenase (complex II, CII), ubiquinol-cytochrome c oxidoreductase (cytochrome b-c1 complex, complex III, CIII) and cytochrome c oxidase (complex IV, CIV), that cooperate to transfer electrons derived from NADH and succinate to molecular oxygen, creating an electrochemical gradient over the inner membrane that drives transmembrane transport and the ATP synthase. Cytochrome c oxidase is the component of the respiratory chain that catalyzes the reduction of oxygen to water. Electrons originating from reduced cytochrome c in the intermembrane space (IMS) are transferred via the dinuclear copper A center (CU(A)) of subunit 2 and heme A of subunit 1 to the active site in subunit 1, a binuclear center (BNC) formed by heme A3 and copper B (CU(B)). The BNC reduces molecular oxygen to 2 water molecules using 4 electrons from cytochrome c in the IMS and 4 protons from the mitochondrial matrix. This is Cytochrome c oxidase subunit 2 (MT-CO2) from Callimico goeldii (Goeldi's marmoset).